The following is an 80-amino-acid chain: EMBRYO SURROUNDING FACTOR 1-like protein 1 (80 aa).

The N-terminal stretch at 1–22 (MKSSHIALLCIVVLSLFALHEC) is a signal peptide. 4 cysteine pairs are disulfide-bonded: cysteine 38-cysteine 52, cysteine 43-cysteine 78, cysteine 50-cysteine 74, and cysteine 53-cysteine 64.

The protein belongs to the MEG family. Expressed in leaves.

The protein is EMBRYO SURROUNDING FACTOR 1-like protein 1 (ESFL1) of Arabidopsis thaliana (Mouse-ear cress).